Here is a 504-residue protein sequence, read N- to C-terminus: Probable protein phosphatase 2C 18 (504 aa).

The disordered stretch occupies residues 1–49 (MGLCYSVDRTTGKEPGEASSTATTAETVEERSGSGRWRRPRDLKGGGDI). Low complexity predominate over residues 17–26 (EASSTATTAE). The 333-residue stretch at 67-399 (IACLYTQQGK…DDCTVVCLFL (333 aa)) folds into the PPM-type phosphatase domain. Residues Asp-103, Gly-104, Asp-344, and Asp-390 each coordinate Mn(2+). Residues 410–435 (TNVKKDSPKEESIESVTNSTSKEEDE) form a disordered region. Basic and acidic residues predominate over residues 412–421 (VKKDSPKEES).

The protein belongs to the PP2C family. Mg(2+) serves as cofactor. Mn(2+) is required as a cofactor.

It catalyses the reaction O-phospho-L-seryl-[protein] + H2O = L-seryl-[protein] + phosphate. The catalysed reaction is O-phospho-L-threonyl-[protein] + H2O = L-threonyl-[protein] + phosphate. The protein is Probable protein phosphatase 2C 18 of Arabidopsis thaliana (Mouse-ear cress).